The following is a 712-amino-acid chain: Semaphorin-1A (712 aa).

The first 20 residues, 1-20 (MVVKILVWSICLIALCHAWM), serve as a signal peptide directing secretion. Residues 21–483 (PDSSSKLINH…GKDEIRLANL (463 aa)) enclose the Sema domain. Residues 21-601 (PDSSSKLINH…IGGCAVRQQL (581 aa)) are Extracellular-facing. Asn-42 and Asn-69 each carry an N-linked (GlcNAc...) asparagine glycan. Disulfide bonds link Cys-95–Cys-105 and Cys-123–Cys-132. N-linked (GlcNAc...) asparagine glycosylation is found at Asn-161 and Asn-265. 4 cysteine pairs are disulfide-bonded: Cys-242-Cys-357, Cys-266-Cys-316, Cys-486-Cys-503, and Cys-495-Cys-512. The chain crosses the membrane as a helical span at residues 602-622 (VIYTAGTLHIVVVVVSIVGLF). Over 623–712 (SWLYSGLSVF…TLQKIKKTYI (90 aa)) the chain is Cytoplasmic.

The protein belongs to the semaphorin family.

Its subcellular location is the membrane. Plays a role in growth cones guidance. In Tribolium confusum (Confused flour beetle), this protein is Semaphorin-1A (SEMA-1A).